Consider the following 478-residue polypeptide: Divinyl ether synthase CYP74D3 (478 aa).

Cys432 serves as a coordination point for heme.

Belongs to the cytochrome P450 family. 9-divinyl ether synthase subfamily. Not detected in leaves, stems or roots of healthy plants.

The protein resides in the cytoplasm. It localises to the cytosol. The enzyme catalyses (9S)-hydroperoxy-(10E,12Z)-octadecadienoate = colneleate + H2O. It catalyses the reaction (9S)-hydroperoxy-(10E,12Z,15Z)-octadecatrienoate = colnelenate + H2O. Functionally, strictly inducible cytochrome P450 involved in the biosynthesis of the anti-fungal toxins colneleate and colnelenate. Can use (9S)-hydroperoxy-(10E,12Z)-octadecadienoate (9-HPOD) and (9S)-hydroperoxy-(10E,12Z,15Z)-octadecatrienoate (9-HPOT) as substrates, but has a very low activity with the corresponding 13-hydroperoxides (13-HPOD and 13-POT). This Nicotiana tabacum (Common tobacco) protein is Divinyl ether synthase CYP74D3.